Here is a 340-residue protein sequence, read N- to C-terminus: Glycerol-3-phosphate dehydrogenase [NAD(P)+] (340 aa).

Residues serine 12, tryptophan 13, and lysine 110 each coordinate NADPH. Sn-glycerol 3-phosphate contacts are provided by lysine 110, glycine 141, and serine 143. NADPH is bound at residue alanine 145. 5 residues coordinate sn-glycerol 3-phosphate: lysine 196, aspartate 249, serine 259, arginine 260, and asparagine 261. Lysine 196 functions as the Proton acceptor in the catalytic mechanism. Arginine 260 is a binding site for NADPH. NADPH-binding residues include valine 284 and glutamate 286.

It belongs to the NAD-dependent glycerol-3-phosphate dehydrogenase family.

The protein localises to the cytoplasm. The catalysed reaction is sn-glycerol 3-phosphate + NAD(+) = dihydroxyacetone phosphate + NADH + H(+). It catalyses the reaction sn-glycerol 3-phosphate + NADP(+) = dihydroxyacetone phosphate + NADPH + H(+). It functions in the pathway membrane lipid metabolism; glycerophospholipid metabolism. Its function is as follows. Catalyzes the reduction of the glycolytic intermediate dihydroxyacetone phosphate (DHAP) to sn-glycerol 3-phosphate (G3P), the key precursor for phospholipid synthesis. This chain is Glycerol-3-phosphate dehydrogenase [NAD(P)+], found in Latilactobacillus sakei subsp. sakei (strain 23K) (Lactobacillus sakei subsp. sakei).